A 550-amino-acid chain; its full sequence is Hydroxylamine reductase (550 aa).

[2Fe-2S] cluster contacts are provided by cysteine 3, cysteine 6, cysteine 18, and cysteine 25. Residues histidine 249, glutamate 273, cysteine 317, cysteine 405, cysteine 433, cysteine 458, glutamate 492, and lysine 494 each contribute to the hybrid [4Fe-2O-2S] cluster site. At cysteine 405 the chain carries Cysteine persulfide.

The protein belongs to the HCP family. It depends on [2Fe-2S] cluster as a cofactor. The cofactor is hybrid [4Fe-2O-2S] cluster.

It localises to the cytoplasm. The enzyme catalyses A + NH4(+) + H2O = hydroxylamine + AH2 + H(+). Catalyzes the reduction of hydroxylamine to form NH(3) and H(2)O. The polypeptide is Hydroxylamine reductase (Escherichia coli (strain SMS-3-5 / SECEC)).